A 69-amino-acid polypeptide reads, in one-letter code: NAD(P)H-quinone oxidoreductase subunit O (69 aa).

It belongs to the complex I NdhO subunit family. NDH-1 can be composed of about 15 different subunits; different subcomplexes with different compositions have been identified which probably have different functions.

It localises to the cellular thylakoid membrane. The catalysed reaction is a plastoquinone + NADH + (n+1) H(+)(in) = a plastoquinol + NAD(+) + n H(+)(out). It catalyses the reaction a plastoquinone + NADPH + (n+1) H(+)(in) = a plastoquinol + NADP(+) + n H(+)(out). Functionally, NDH-1 shuttles electrons from an unknown electron donor, via FMN and iron-sulfur (Fe-S) centers, to quinones in the respiratory and/or the photosynthetic chain. The immediate electron acceptor for the enzyme in this species is believed to be plastoquinone. Couples the redox reaction to proton translocation, and thus conserves the redox energy in a proton gradient. Cyanobacterial NDH-1 also plays a role in inorganic carbon-concentration. In Acaryochloris marina (strain MBIC 11017), this protein is NAD(P)H-quinone oxidoreductase subunit O.